We begin with the raw amino-acid sequence, 141 residues long: uncharacterized protein (141 aa).

The protein belongs to the peptidase C56 family.

This is an uncharacterized protein from Streptomyces lividans.